The sequence spans 818 residues: Cation/H(+) antiporter 6A (818 aa).

Helical transmembrane passes span 51-71 (NFWE…FFIW), 88-110 (FTYM…KSWI), 123-143 (VAET…GVTM), 156-176 (SVIG…TFRY), 192-212 (LIIF…LKDL), 222-242 (IALS…FFNA), 248-268 (LYGF…ICVV), 288-308 (FYLY…NKVI), 310-330 (LFGP…YPLG), 340-360 (FNLG…VDLL), 376-396 (IYEV…VTTI), 409-429 (FALA…YTYA), and 438-458 (EVFT…PMLL).

It belongs to the monovalent cation:proton antiporter 2 (CPA2) transporter (TC 2.A.37) family. CHX (TC 2.A.37.4) subfamily. Preferentially expressed in pollen.

The protein resides in the membrane. Its function is as follows. May operate as a cation/H(+) antiporter. The sequence is that of Cation/H(+) antiporter 6A (CHX6a) from Arabidopsis thaliana (Mouse-ear cress).